The sequence spans 425 residues: Iron-sulfur cluster assembly factor IBA57 homolog, mitochondrial (425 aa).

The N-terminal 28 residues, M1–A28, are a transit peptide targeting the mitochondrion. Residues R403 to D425 are disordered.

It belongs to the GcvT family. CAF17/IBA57 subfamily.

The protein localises to the mitochondrion matrix. The sequence is that of Iron-sulfur cluster assembly factor IBA57 homolog, mitochondrial (CAF17) from Coccidioides immitis (strain RS) (Valley fever fungus).